The following is a 449-amino-acid chain: MFS-type transporter 1 (449 aa).

The span at 1–37 shows a compositional bias: basic and acidic residues; the sequence is MTHSSSNEHEKEDDRRASDDMMDRDDQNAKEEQDVSK. The interval 1 to 43 is disordered; sequence MTHSSSNEHEKEDDRRASDDMMDRDDQNAKEEQDVSKDAPPVN. The next 6 membrane-spanning stretches (helical) occupy residues 61-81, 97-117, 127-147, 152-172, 185-205, and 212-232; these read VAGG…IGIF, TISW…LVVG, YILL…SLST, ILLS…TPAV, LANG…PIMF, and VGFP…LIIA. Asn233 is a glycosylation site (N-linked (GlcNAc...) asparagine). The next 6 helical transmembrane spans lie at 262-282, 298-318, 326-346, 349-369, 390-410, and 420-440; these read LLTT…INYI, YLIP…GFVA, VHTF…LPAA, APII…VAIL, FGVL…FVAH, and IWTG…RISL.

It belongs to the major facilitator superfamily. Monocarboxylate porter (TC 2.A.1.13) family.

Its subcellular location is the cell membrane. It carries out the reaction erythrostominone(in) = erythrostominone(out). The enzyme catalyses deoxyerythrostominone(in) = deoxyerythrostominone(out). It catalyses the reaction epierythrostominol(in) = epierythrostominol(out). The catalysed reaction is deoxyerythrostominol(in) = deoxyerythrostominol(out). In terms of biological role, MFS-type transporter that mediates the secretion of the 4 major naphthoquinone derivatives produced, erythrostominone (NQ1), deoxyerythrostominone (NQ2), epierythrostominol (NQ4), and deoxyerythrostominol (NQ5), as well as of 3 newly identified naphthoquinone derivatives termed NQ7, NQ8 and NQ9. The chain is MFS-type transporter 1 from Ophiocordyceps sp. (strain BCC 1869) (Entomopathogenic fungus).